A 130-amino-acid polypeptide reads, in one-letter code: Large ribosomal subunit protein bL17 (130 aa).

This sequence belongs to the bacterial ribosomal protein bL17 family. In terms of assembly, part of the 50S ribosomal subunit. Contacts protein L32.

This Azotobacter vinelandii (strain DJ / ATCC BAA-1303) protein is Large ribosomal subunit protein bL17.